Reading from the N-terminus, the 907-residue chain is MDTSRLGVLLSLPVLLQLATGGSSPRSGVLLRGCPTHCHCEPDGRMLLRVDCSDLGLSELPSNLSVFTSYLDLSMNNISQLLPNPLPSLRFLEELRLAGNALTYIPKGAFTGLYSLKVLMLQNNQLRHVPTEALQNLRSLQSLRLDANHISYVPPSCFSGLHSLRHLWLDDNALTEIPVQAFRSLSALQAMTLALNKIHHIPDYAFGNLSSLVVLHLHNNRIHSLGKKCFDGLHSLETLDLNYNNLDEFPTAIRTLSNLKELGFHSNNIRSIPEKAFVGNPSLITIHFYDNPIQFVGRSAFQHLPELRTLTLNGASQITEFPDLTGTANLESLTLTGAQISSLPQTVCNQLPNLQVLDLSYNLLEDLPSFSVCQKLQKIDLRHNEIYEIKVDTFQQLLSLRSLNLAWNKIAIIHPNAFSTLPSLIKLDLSSNLLSSFPITGLHGLTHLKLTGNHALQSLISSENFPELKVIEMPYAYQCCAFGVCENAYKISNQWNKGDNSSMDDLHKKDAGMFQAQDERDLEDFLLDFEEDLKALHSVQCSPSPGPFKPCEHLLDGWLIRIGVWTIAVLALTCNALVTSTVFRSPLYISPIKLLIGVIAAVNMLTGVSSAVLAGVDAFTFGSFARHGAWWENGVGCHVIGFLSIFASESSVFLLTLAALERGFSVKYSAKFETKAPFSSLKVIILLCALLALTMAAVPLLGGSKYGASPLCLPLPFGEPSTMGYMVALILLNSLCFLMMTIAYTKLYCNLDKGDLENIWDCSMVKHIALLLFTNCILNCPVAFLSFSSLINLTFISPEVIKFILLVVVPLPACLNPLLYILFNPHFKEDLVSLRKQTYVWTRSKHPSLMSINSDDVEKQSCDSTQALVTFTSSSITYDLPPSSVPSPAYPVTESCHLSSVAFVPCL.

A signal peptide spans 1–21; the sequence is MDTSRLGVLLSLPVLLQLATG. Residues 22–561 are Extracellular-facing; that stretch reads GSSPRSGVLL…EHLLDGWLIR (540 aa). The 42-residue stretch at 25–66 folds into the LRRNT domain; it reads PRSGVLLRGCPTHCHCEPDGRMLLRVDCSDLGLSELPSNLSV. 2 disulfides stabilise this stretch: C34/C40 and C38/C52. N-linked (GlcNAc...) asparagine glycans are attached at residues N63 and N77. LRR repeat units lie at residues 67-90, 91-112, 115-136, 139-160, 163-184, 187-208, 211-232, 235-256, 258-279, 282-303, 306-328, 329-350, 353-374, 375-396, 399-420, and 423-446; these read FTSYLDLSMNNISQLLPNPLPSLR, FLEELRLAGNALTYIPKGAFTG, SLKVLMLQNNQLRHVPTEALQN, SLQSLRLDANHISYVPPSCFSG, SLRHLWLDDNALTEIPVQAFRS, ALQAMTLALNKIHHIPDYAFGN, SLVVLHLHNNRIHSLGKKCFDG, SLETLDLNYNNLDEFPTAIRTL, NLKELGFHSNNIRSIPEKAFVG, SLITIHFYDNPIQFVGRSAFQH, ELRTLTLNGASQITEFPDLTGTA, NLESLTLTGAQISSLPQTVCNQ, NLQVLDLSYNLLEDLPSFSVCQ, KLQKIDLRHNEIYEIKVDTFQQ, SLRSLNLAWNKIAIIHPNAFST, and SLIKLDLSSNLLSSFPITGLHGLT. N-linked (GlcNAc...) asparagine glycosylation occurs at N208. An intrachain disulfide couples C348 to C373. C479 and C541 are joined by a disulfide. The N-linked (GlcNAc...) asparagine glycan is linked to N500. The chain crosses the membrane as a helical span at residues 562–582; the sequence is IGVWTIAVLALTCNALVTSTV. The Cytoplasmic segment spans residues 583 to 593; sequence FRSPLYISPIK. The chain crosses the membrane as a helical span at residues 594–614; that stretch reads LLIGVIAAVNMLTGVSSAVLA. Topologically, residues 615-638 are extracellular; that stretch reads GVDAFTFGSFARHGAWWENGVGCH. Residues C637 and C712 are joined by a disulfide bond. Residues 639 to 659 form a helical membrane-spanning segment; sequence VIGFLSIFASESSVFLLTLAA. Residues 660-682 are Cytoplasmic-facing; it reads LERGFSVKYSAKFETKAPFSSLK. A helical membrane pass occupies residues 683–703; sequence VIILLCALLALTMAAVPLLGG. Over 704–722 the chain is Extracellular; the sequence is SKYGASPLCLPLPFGEPST. A helical membrane pass occupies residues 723–743; the sequence is MGYMVALILLNSLCFLMMTIA. Over 744–767 the chain is Cytoplasmic; sequence YTKLYCNLDKGDLENIWDCSMVKH. Residues 768–788 form a helical membrane-spanning segment; that stretch reads IALLLFTNCILNCPVAFLSFS. Over 789 to 802 the chain is Extracellular; that stretch reads SLINLTFISPEVIK. Residue N792 is glycosylated (N-linked (GlcNAc...) asparagine). The helical transmembrane segment at 803–823 threads the bilayer; sequence FILLVVVPLPACLNPLLYILF. Topologically, residues 824-907 are cytoplasmic; that stretch reads NPHFKEDLVS…LSSVAFVPCL (84 aa).

The protein belongs to the G-protein coupled receptor 1 family. In terms of assembly, identified in a complex composed of RNF43, LGR5 and RSPO1. Also interacts with other R-spondin ligands, including RSPO2, RSPO3 and RSPO4. In terms of tissue distribution, expressed in skeletal muscle, placenta, spinal cord, and various region of brain. Expressed at the base of crypts in colonic and small mucosa stem cells. In premalignant cancer expression is not restricted to the cript base. Overexpressed in cancers of the ovary, colon and liver.

The protein localises to the cell membrane. Its subcellular location is the golgi apparatus. It localises to the trans-Golgi network membrane. In terms of biological role, receptor for R-spondins that potentiates the canonical Wnt signaling pathway and acts as a stem cell marker of the intestinal epithelium and the hair follicle. Upon binding to R-spondins (RSPO1, RSPO2, RSPO3 or RSPO4), associates with phosphorylated LRP6 and frizzled receptors that are activated by extracellular Wnt receptors, triggering the canonical Wnt signaling pathway to increase expression of target genes. In contrast to classical G-protein coupled receptors, does not activate heterotrimeric G-proteins to transduce the signal. Involved in the development and/or maintenance of the adult intestinal stem cells during postembryonic development. This is Leucine-rich repeat-containing G-protein coupled receptor 5 (LGR5) from Homo sapiens (Human).